A 350-amino-acid polypeptide reads, in one-letter code: Histidinol-phosphate aminotransferase (350 aa).

At Lys-209 the chain carries N6-(pyridoxal phosphate)lysine.

Belongs to the class-II pyridoxal-phosphate-dependent aminotransferase family. Histidinol-phosphate aminotransferase subfamily. Homodimer. The cofactor is pyridoxal 5'-phosphate.

It catalyses the reaction L-histidinol phosphate + 2-oxoglutarate = 3-(imidazol-4-yl)-2-oxopropyl phosphate + L-glutamate. Its pathway is amino-acid biosynthesis; L-histidine biosynthesis; L-histidine from 5-phospho-alpha-D-ribose 1-diphosphate: step 7/9. The protein is Histidinol-phosphate aminotransferase of Citrifermentans bemidjiense (strain ATCC BAA-1014 / DSM 16622 / JCM 12645 / Bem) (Geobacter bemidjiensis).